Consider the following 183-residue polypeptide: ATP synthase subunit b, chloroplastic (183 aa).

The chain crosses the membrane as a helical span at residues 27-49 (LATNLINLTVVVGVLIYFGKGVL).

This sequence belongs to the ATPase B chain family. F-type ATPases have 2 components, F(1) - the catalytic core - and F(0) - the membrane proton channel. F(1) has five subunits: alpha(3), beta(3), gamma(1), delta(1), epsilon(1). F(0) has four main subunits: a(1), b(1), b'(1) and c(10-14). The alpha and beta chains form an alternating ring which encloses part of the gamma chain. F(1) is attached to F(0) by a central stalk formed by the gamma and epsilon chains, while a peripheral stalk is formed by the delta, b and b' chains.

It localises to the plastid. It is found in the chloroplast thylakoid membrane. Its function is as follows. F(1)F(0) ATP synthase produces ATP from ADP in the presence of a proton or sodium gradient. F-type ATPases consist of two structural domains, F(1) containing the extramembraneous catalytic core and F(0) containing the membrane proton channel, linked together by a central stalk and a peripheral stalk. During catalysis, ATP synthesis in the catalytic domain of F(1) is coupled via a rotary mechanism of the central stalk subunits to proton translocation. In terms of biological role, component of the F(0) channel, it forms part of the peripheral stalk, linking F(1) to F(0). This chain is ATP synthase subunit b, chloroplastic, found in Oryza nivara (Indian wild rice).